We begin with the raw amino-acid sequence, 109 residues long: Elicitor peptide 2 (109 aa).

The propeptide occupies 1-73 (MEKLDKRREE…KDDDVVVLLR (73 aa)). The span at 74 to 88 (DNKAKSKKRDKEKPS) shows a compositional bias: basic and acidic residues. A disordered region spans residues 74–109 (DNKAKSKKRDKEKPSSGRPGQTNSVPNAAIQVYKED).

It belongs to the brassicaceae elicitor peptide family.

Functionally, elicitor of plant defense. The protein is Elicitor peptide 2 (PEP2) of Arabidopsis thaliana (Mouse-ear cress).